A 432-amino-acid chain; its full sequence is Uracil permease (432 aa).

The next 12 helical transmembrane spans lie at 25 to 45 (LFAM…DPSI), 65 to 85 (VPAY…AKTA), 89 to 109 (GAAM…ALII), 124 to 144 (VVVG…AVGM), 155 to 175 (LLHF…SVLA), 181 to 201 (LIPV…VGLV), 206 to 226 (VAAA…DYPV), 228 to 248 (VTWE…SEHI), 305 to 325 (VYSV…GFVG), 330 to 350 (LISS…FGII), 370 to 390 (NLVI…LKIS), and 393 to 413 (FQIT…LILP).

The protein belongs to the nucleobase:cation symporter-2 (NCS2) (TC 2.A.40) family.

It localises to the cell membrane. In terms of biological role, transport of uracil in the cell. The chain is Uracil permease (pyrP) from Bacillus caldolyticus.